The sequence spans 216 residues: Probable GTP-binding protein EngB (216 aa).

Residues 37–214 enclose the EngB-type G domain; the sequence is GSVEIAFAGR…RAAMIRLLDE (178 aa). GTP is bound by residues 45 to 52, 72 to 76, 92 to 95, 159 to 162, and 193 to 195; these read GRSNVGKS, GRTQE, DMPG, TKAD, and TSS. Ser52 and Thr74 together coordinate Mg(2+).

This sequence belongs to the TRAFAC class TrmE-Era-EngA-EngB-Septin-like GTPase superfamily. EngB GTPase family. Mg(2+) is required as a cofactor.

Its function is as follows. Necessary for normal cell division and for the maintenance of normal septation. The polypeptide is Probable GTP-binding protein EngB (Rhodopseudomonas palustris (strain ATCC BAA-98 / CGA009)).